Reading from the N-terminus, the 416-residue chain is MSSNCTSTTAVAVAPLSASKTKTKKKHFVCQKVKLFRASEPILSVLMWGVNHTINELSNVPVPVMLMPDDFKAYSKIKVDNHLFNKENLPSRFKFKEYCPMVFRNLRERFGIDDQDYQNSVTRSAPINSDSQGRCGTRFLTTYDRRFVIKTVSSEDVAEMHNILKKYHQFIVECHGNTLLPQFLGMYRLTVDGVETYMVVTRNVFSHRLTVHRKYDLKGSTVAREASDKEKAKDLPTFKDNDFLNEGQKLHVGEESKKNFLEKLKRDVEFLAQLKIMDYSLLVGIHDVDRAEQEEMEVEERAEDEECENDGVGGNLLCSYGTPPDSPGNLLSFPRFFGPGEFDPSVDVYAMKSHESSPKKEVYFMAIIDILTPYDTKKKAAHAAKTVKHGAGAEISTVNPEQYSKRFNEFMSNILT.

Ser2 is subject to N-acetylserine. The residue at position 8 (Thr8) is a Phosphothreonine. Ser19 is modified (phosphoserine). A PIPK domain is found at 38–415; it reads ASEPILSVLM…RFNEFMSNIL (378 aa). Residues 64-70 are required for interaction with PIP5K1A; the sequence is VMLMPDD. Lys94 and Lys150 each carry N6-acetyllysine. ATP is bound by residues 202-204 and Lys214; that span reads RNV. Residues 203–204 and Lys214 contribute to the GTP site; that span reads NV. A Phosphothreonine modification is found at Thr322. A Phosphoserine modification is found at Ser326. GTP is bound at residue Asp369.

As to quaternary structure, homodimer. Binds TNFRSF1A. Interacts with PIP4K2A; the interaction suppresses ubiquitination by the SPOP/CUL3 complex. In terms of processing, ubiquitinated by the SPOP/CUL3 complex. Ubiquitination is stimulated by PtdIns5P levels. Phosphorylated on serine residues. In terms of tissue distribution, highly expressed in brain, heart, pancreas, skeletal muscle and kidney. Detected at lower levels in placenta, lung and liver.

The protein localises to the endoplasmic reticulum membrane. The protein resides in the cell membrane. It is found in the nucleus. Its subcellular location is the cytoplasm. It catalyses the reaction a 1,2-diacyl-sn-glycero-3-phospho-(1D-myo-inositol-5-phosphate) + ATP = a 1,2-diacyl-sn-glycero-3-phospho-(1D-myo-inositol-4,5-bisphosphate) + ADP + H(+). The catalysed reaction is 1,2-dihexadecanoyl-sn-glycero-3-phospho-(1D-myo-inositol-5-phosphate) + ATP = 1,2-dihexadecanoyl-sn-glycero-3-phospho-(1D-myo-inositol-4,5-bisphosphate) + ADP + H(+). The enzyme catalyses 1,2-dihexadecanoyl-sn-glycero-3-phospho-(1D-myo-inositol-5-phosphate) + GTP = 1,2-dihexadecanoyl-sn-glycero-3-phospho-(1D-myo-inositol-4,5-bisphosphate) + GDP + H(+). Participates in the biosynthesis of phosphatidylinositol 4,5-bisphosphate. Preferentially utilizes GTP, rather than ATP, for PI(5)P phosphorylation and its activity reflects changes in direct proportion to the physiological GTP concentration. Its GTP-sensing activity is critical for metabolic adaptation. PIP4Ks negatively regulate insulin signaling through a catalytic-independent mechanism. They interact with PIP5Ks and suppress PIP5K-mediated PtdIns(4,5)P2 synthesis and insulin-dependent conversion to PtdIns(3,4,5)P3. This is Phosphatidylinositol 5-phosphate 4-kinase type-2 beta from Homo sapiens (Human).